A 219-amino-acid chain; its full sequence is ATP-dependent dethiobiotin synthetase BioD (219 aa).

12 to 17 (EVGKTY) is a binding site for ATP. Mg(2+) is bound at residue Thr16. Lys37 is an active-site residue. Ser41 contributes to the substrate binding site. Residues Asp52, 114 to 117 (EGAG), and 174 to 175 (NC) contribute to the ATP site. Mg(2+) is bound by residues Asp52 and Glu114.

The protein belongs to the dethiobiotin synthetase family. Homodimer. The cofactor is Mg(2+).

It localises to the cytoplasm. The enzyme catalyses (7R,8S)-7,8-diammoniononanoate + CO2 + ATP = (4R,5S)-dethiobiotin + ADP + phosphate + 3 H(+). The protein operates within cofactor biosynthesis; biotin biosynthesis; biotin from 7,8-diaminononanoate: step 1/2. Its function is as follows. Catalyzes a mechanistically unusual reaction, the ATP-dependent insertion of CO2 between the N7 and N8 nitrogen atoms of 7,8-diaminopelargonic acid (DAPA, also called 7,8-diammoniononanoate) to form a ureido ring. The sequence is that of ATP-dependent dethiobiotin synthetase BioD from Francisella tularensis subsp. holarctica (strain FTNF002-00 / FTA).